The chain runs to 214 residues: Large ribosomal subunit protein bL25 (214 aa).

Residues 179–214 (VPPTQGPSEAEIEEVEAGDADTPEPEVVGEKEEDEE) are disordered. Residues 188–202 (AEIEEVEAGDADTPE) are compositionally biased toward acidic residues.

It belongs to the bacterial ribosomal protein bL25 family. CTC subfamily. As to quaternary structure, part of the 50S ribosomal subunit; part of the 5S rRNA/L5/L18/L25 subcomplex. Contacts the 5S rRNA. Binds to the 5S rRNA independently of L5 and L18.

This is one of the proteins that binds to the 5S RNA in the ribosome where it forms part of the central protuberance. This Staphylococcus carnosus (strain TM300) protein is Large ribosomal subunit protein bL25.